The chain runs to 28 residues: Alkaline serine protease NJP (28 aa).

Inhibited by PMSF. Not or very weakly inhibited by EDTA, EGTA, beta-mercaptoethanol, benzamidine, aprotinin, iodoacetic acid, pepstatin A and SBTI. Alkaline thrombin-like serine protease. Has fibrinolytic and fibrinogenolytic but not plasminogenolytic activity. Cleaves fibrinogen chains Aalpha, Bbeta and gamma chains in that order. Cleaves after Arg and Lys residues. The chain is Alkaline serine protease NJP from Hediste japonica (Polychaete worm).